Consider the following 181-residue polypeptide: Lectin beta-1 and beta-2 chains (181 aa).

Glutamate 119 and aspartate 121 together coordinate Mn(2+). Ca(2+)-binding residues include aspartate 121, phenylalanine 123, asparagine 125, and aspartate 129. Residues aspartate 129 and histidine 136 each contribute to the Mn(2+) site.

This sequence belongs to the leguminous lectin family. Tetramer of two alpha and two beta chains.

The sequence is that of Lectin beta-1 and beta-2 chains from Lathyrus ochrus (Cyprus-vetch).